A 335-amino-acid chain; its full sequence is Phosphatidylglycerol--prolipoprotein diacylglyceryl transferase (335 aa).

3 helical membrane passes run 31–51 (IYWYGIIFVCGFLIAILTYSL), 67–87 (YIFLAIPMTIIGARLWSLAIG), and 100–120 (LAIQGGVIAGVLSAAVYFPLI). Arginine 163 contacts a 1,2-diacyl-sn-glycero-3-phospho-(1'-sn-glycerol). 3 helical membrane passes run 213-233 (PLFLYESFFNVIVFVFIYFGL), 235-255 (YIKQLKIGFISMSYFFFYGVT), and 277-297 (SLLLIFGVLGALYVQFIAPLL).

It belongs to the Lgt family.

Its subcellular location is the cell membrane. It carries out the reaction L-cysteinyl-[prolipoprotein] + a 1,2-diacyl-sn-glycero-3-phospho-(1'-sn-glycerol) = an S-1,2-diacyl-sn-glyceryl-L-cysteinyl-[prolipoprotein] + sn-glycerol 1-phosphate + H(+). It participates in protein modification; lipoprotein biosynthesis (diacylglyceryl transfer). Its function is as follows. Catalyzes the transfer of the diacylglyceryl group from phosphatidylglycerol to the sulfhydryl group of the N-terminal cysteine of a prolipoprotein, the first step in the formation of mature lipoproteins. This chain is Phosphatidylglycerol--prolipoprotein diacylglyceryl transferase, found in Ureaplasma parvum serovar 3 (strain ATCC 27815 / 27 / NCTC 11736).